The primary structure comprises 344 residues: MKFLDLAKVYIRSGAGGGGSVSFRREKYIEYGGPDGGDGGGGGNVYIEVVEGLNTLIDFRYQQHFFAKNGQPGMGKQRTGKDGADIVLRVPAGTEVLEEDQETLIADLEEVGQRICIAKGGNGGFGNLHFKSATNQAPRRANPGQEGVERTIWLRLKLIADVGLLGLPNAGKSTFLAATSNARPKIADYPFTTLVPNLGVVGVDGAEFVIADIPGLIEGASEGRGLGDTFLGHVERCAALLHLVDGTSEDVVGDYQTIIAELEAYGGELALKPRITALNKIDAIEPEELAKKRAALGKVAGNLMEMSGVARTGVTEVLRVLRARVDADRKAARDALEEPDRWRP.

Positions 1–159 (MKFLDLAKVY…RTIWLRLKLI (159 aa)) constitute an Obg domain. An OBG-type G domain is found at 160-326 (ADVGLLGLPN…VLRVLRARVD (167 aa)). Residues 166–173 (GLPNAGKS), 191–195 (FTTLV), 212–215 (DIPG), 279–282 (NKID), and 307–309 (SGV) contribute to the GTP site. 2 residues coordinate Mg(2+): S173 and T193.

This sequence belongs to the TRAFAC class OBG-HflX-like GTPase superfamily. OBG GTPase family. As to quaternary structure, monomer. Requires Mg(2+) as cofactor.

The protein localises to the cytoplasm. Functionally, an essential GTPase which binds GTP, GDP and possibly (p)ppGpp with moderate affinity, with high nucleotide exchange rates and a fairly low GTP hydrolysis rate. Plays a role in control of the cell cycle, stress response, ribosome biogenesis and in those bacteria that undergo differentiation, in morphogenesis control. The sequence is that of GTPase Obg from Jannaschia sp. (strain CCS1).